The chain runs to 83 residues: Carboxysome shell vertex protein CsoS4A (83 aa).

Residues 1 to 78 form the BMV domain; it reads MKIMQVEKTL…SDLTIIGIID (78 aa).

It belongs to the CcmL/EutN family. CsoS4 subfamily. In terms of assembly, homopentamer.

The protein localises to the carboxysome. In terms of biological role, probably forms vertices in the carboxysome, a polyhedral inclusion where RuBisCO (ribulose bisphosphate carboxylase, cbbL-cbbS) is sequestered. Has been modeled to induce curvature upon insertion into an otherwise flat hexagonal layer of major carboxysome subunits. A minor shell protein, only 12 pentamers of CsoS4A/CsoS4B are calculated to be present in each carboxysome. The 2 CsoS4 proteins contribute to the impermeability of the carboxysome to CO(2). Its function is as follows. Unlike beta-carboxysomes, alpha-carboxysomes (Cb) can form without cargo protein. CsoS2 is essential for Cb formation and is also capable of targeting foreign proteins to the Cb. The Cb shell assembles with the aid of CsoS2; CsoS1A, CsoS1B and CsoS1C form the majority of the shell while CsoS4A and CsoS4B form vertices. CsoS1D forms pseudohexamers that probably control metabolite flux into and out of the shell. This is Carboxysome shell vertex protein CsoS4A from Halothiobacillus neapolitanus (strain ATCC 23641 / c2) (Thiobacillus neapolitanus).